An 809-amino-acid chain; its full sequence is TPR repeat-containing protein TP_0920 (809 aa).

The tract at residues 103 to 125 (PGEARALPNSEQPEVPASLDSTS) is disordered. TPR repeat units lie at residues 315–348 (LREY…DPHC), 383–416 (AFLS…DPHQ), 418–450 (LFAL…FLAQ), 471–504 (TEVR…GSAD), 513–550 (LLLR…APDC), 552–582 (LYHF…DPDN), 583–616 (GWLH…LPHE), 656–689 (GQAF…EPQN), and 723–756 (AHVY…WPQC).

This Treponema pallidum (strain Nichols) protein is TPR repeat-containing protein TP_0920.